A 638-amino-acid polypeptide reads, in one-letter code: Chaperone protein DnaK (638 aa).

Thr197 is subject to Phosphothreonine; by autocatalysis. The tract at residues 598 to 638 is disordered; it reads QQSAPSGAAAGPDEGAPSGSGGTSGTRGGDDVIDAEFTETK. The span at 615 to 624 shows a compositional bias: gly residues; the sequence is SGSGGTSGTR. Residues 628 to 638 are compositionally biased toward acidic residues; it reads DVIDAEFTETK.

The protein belongs to the heat shock protein 70 family.

Acts as a chaperone. The chain is Chaperone protein DnaK from Gloeobacter violaceus (strain ATCC 29082 / PCC 7421).